The primary structure comprises 287 residues: U-megalopygitoxin(8)-Mo12 (287 aa).

A signal peptide spans 1 to 17 (MNLQYLILSLLSTTVYG). The residue at position 284 (histidine 284) is a Histidine amide.

The protein belongs to the megalysin family. Contains 2 disulfide bonds. Expressed by the venom apparatus.

The protein resides in the secreted. Its subcellular location is the target cell membrane. May function as a large pore-forming protein. This is U-megalopygitoxin(8)-Mo12 from Megalopyge opercularis (Southern flannel moth).